The following is a 506-amino-acid chain: Maturase K (506 aa).

The protein belongs to the intron maturase 2 family. MatK subfamily.

It localises to the plastid. Its subcellular location is the chloroplast. In terms of biological role, usually encoded in the trnK tRNA gene intron. Probably assists in splicing its own and other chloroplast group II introns. In Erica tetralix (Cross-leaved heath), this protein is Maturase K.